The following is a 286-amino-acid chain: 2-hydroxy-6-oxononadienedioate/2-hydroxy-6-oxononatrienedioate hydrolase 2 (286 aa).

His-266 functions as the Proton acceptor in the catalytic mechanism.

The protein belongs to the AB hydrolase superfamily. MhpC family. Homodimer.

It carries out the reaction (2Z,4E)-2-hydroxy-6-oxonona-2,4-dienedioate + H2O = (2Z)-2-hydroxypenta-2,4-dienoate + succinate + H(+). The catalysed reaction is (2Z,4E,7E)-2-hydroxy-6-oxonona-2,4,7-trienedioate + H2O = (2Z)-2-hydroxypenta-2,4-dienoate + fumarate + H(+). It functions in the pathway aromatic compound metabolism; 3-phenylpropanoate degradation. In terms of biological role, catalyzes the cleavage of the C5-C6 bond of 2-hydroxy-6-oxononadienedioate and 2-hydroxy-6-oxononatrienedioate, a dienol ring fission product of the bacterial meta-cleavage pathway for degradation of phenylpropionic acid. In Pseudomonas putida (Arthrobacter siderocapsulatus), this protein is 2-hydroxy-6-oxononadienedioate/2-hydroxy-6-oxononatrienedioate hydrolase 2.